A 258-amino-acid chain; its full sequence is 5'-nucleotidase SurE (258 aa).

Residues Asp-8, Asp-9, Ser-40, and Asn-98 each contribute to the a divalent metal cation site.

The protein belongs to the SurE nucleotidase family. A divalent metal cation serves as cofactor.

It localises to the cytoplasm. The enzyme catalyses a ribonucleoside 5'-phosphate + H2O = a ribonucleoside + phosphate. In terms of biological role, nucleotidase that shows phosphatase activity on nucleoside 5'-monophosphates. In Synechococcus elongatus (strain ATCC 33912 / PCC 7942 / FACHB-805) (Anacystis nidulans R2), this protein is 5'-nucleotidase SurE.